A 495-amino-acid chain; its full sequence is Neuronal acetylcholine receptor subunit beta-4 (495 aa).

Positions 1–20 (MRGTPLLLVSLFALLQPGDC) are cleaved as a signal peptide. Over 21 to 235 (RLANAEEKLM…IIKRKPLFYT (215 aa)) the chain is Extracellular. N-linked (GlcNAc...) asparagine glycans are attached at residues Asn-35, Asn-92, Asn-137, and Asn-165. A disulfide bond links Cys-152 and Cys-166. A helical transmembrane segment spans residues 236–256 (INLIIPCVLITSLAILVFYLP). Residues 257-264 (SDCGEKMT) lie on the Cytoplasmic side of the membrane. A Na(+)-binding site is contributed by Glu-261. Residues 265 to 285 (LCISVLLALTFFLLLISKIVP) form a helical membrane-spanning segment. At 286–297 (PTSLDIPLIGKY) the chain is on the extracellular side. Residues 298–318 (LLFTMVLVTFSIVTTVCVLNV) form a helical membrane-spanning segment. The Cytoplasmic segment spans residues 319–463 (HHRSPSTHTM…WKFVAMVVDR (145 aa)). Residues 464–484 (LFLWVFVIVCILGTMGLFLPP) traverse the membrane as a helical segment. The Extracellular segment spans residues 485–495 (LFQIHAPSKGL).

The protein belongs to the ligand-gated ion channel (TC 1.A.9) family. Acetylcholine receptor (TC 1.A.9.1) subfamily. Beta-4/CHRNB4 sub-subfamily. Neuronal AChR is composed of two different types of subunits: alpha and beta. CHRNB4/Beta-4 subunit can be combined to CHRNA2/alpha-2, CHRNA3/alpha-3 or CHRNA4/alpha-4, CHRNA5/alpha-5 and CHRNB3/beta-3 to give rise to functional receptors. Forms stoichiometries such as (CHRNA3)2:(CHRNB4)3 or (CHRNA3:CHRNB4)2:CHRNB3. Interacts with RIC3; which is required for proper folding and assembly. Interacts with LYPD6. In terms of tissue distribution, predominantly expressed by immature T-cells in the thymus.

It is found in the synaptic cell membrane. It localises to the cell membrane. The enzyme catalyses K(+)(in) = K(+)(out). The catalysed reaction is Na(+)(in) = Na(+)(out). It catalyses the reaction Ca(2+)(in) = Ca(2+)(out). Activated by a myriad of ligands such as acetylcholine, cytisine, nicotine, choline and epibatidine. The heteropentamer CHRNA3:CHRNB4 activity is blocked by the alpha-conotoxin ImI and AuIB. Component of neuronal acetylcholine receptors (nAChRs) that function as pentameric, ligand-gated cation channels with high calcium permeability among other activities. nAChRs are excitatory neurotrasnmitter receptors formed by a collection of nAChR subunits known to mediate synaptic transmission in the nervous system and the neuromuscular junction. Each nAchR subunit confers differential attributes to channel properties, including activation, deactivation and desensitization kinetics, pH sensitivity, cation permeability, and binding to allosteric modulators. CHRNB4 forms heteropentameric neuronal acetylcholine receptors with CHRNA2, CHRNA3 and CHRNA4, as well as CHRNA5 and CHRNB3 as accesory subunits. CHRNA3:CHRNB4 being predominant in neurons of the autonomic ganglia, it is known as ganglionic nicotinic receptor. CHRNA3:CHRNB4 or CHRNA3:CHRNA5:CHRNB4 play also an important role in the habenulo-interpeduncular tract, modulating the mesolimbic dopamine system and affecting reward circuits and addiction. Hypothalamic CHRNA3:CHRNB4 nAChR activation by nicotine leads to activation of POMC neurons and a decrease in food intake. The polypeptide is Neuronal acetylcholine receptor subunit beta-4 (Chrnb4) (Mus musculus (Mouse)).